Reading from the N-terminus, the 872-residue chain is Alanine--tRNA ligase (872 aa).

4 residues coordinate Zn(2+): H567, H571, C669, and H673.

Belongs to the class-II aminoacyl-tRNA synthetase family. Requires Zn(2+) as cofactor.

It localises to the cytoplasm. It carries out the reaction tRNA(Ala) + L-alanine + ATP = L-alanyl-tRNA(Ala) + AMP + diphosphate. Its function is as follows. Catalyzes the attachment of alanine to tRNA(Ala) in a two-step reaction: alanine is first activated by ATP to form Ala-AMP and then transferred to the acceptor end of tRNA(Ala). Also edits incorrectly charged Ser-tRNA(Ala) and Gly-tRNA(Ala) via its editing domain. This chain is Alanine--tRNA ligase, found in Streptococcus suis (strain 98HAH33).